Reading from the N-terminus, the 66-residue chain is Large ribosomal subunit protein uL29 (66 aa).

The protein belongs to the universal ribosomal protein uL29 family.

The chain is Large ribosomal subunit protein uL29 from Ruegeria sp. (strain TM1040) (Silicibacter sp.).